A 419-amino-acid polypeptide reads, in one-letter code: DNA primase DnaG (419 aa).

The region spanning 174–260 is the Toprim domain; the sequence is DAIIVVEGRS…EVEDLEKDEV (87 aa). Residues Glu180, Asp222, and Asp224 each contribute to the Mg(2+) site. The segment at 277–314 is disordered; that stretch reads HNILSESDSKNSHKKHNGKHNNKHSNNKHQQHETKVKE. The span at 288–305 shows a compositional bias: basic residues; that stretch reads SHKKHNGKHNNKHSNNKH.

The protein belongs to the archaeal DnaG primase family. As to quaternary structure, forms a ternary complex with MCM helicase and DNA. Component of the archaeal exosome complex. Requires Mg(2+) as cofactor.

It catalyses the reaction ssDNA + n NTP = ssDNA/pppN(pN)n-1 hybrid + (n-1) diphosphate.. Functionally, RNA polymerase that catalyzes the synthesis of short RNA molecules used as primers for DNA polymerase during DNA replication. Also part of the exosome, which is a complex involved in RNA degradation. Acts as a poly(A)-binding protein that enhances the interaction between heteromeric, adenine-rich transcripts and the exosome. This is DNA primase DnaG from Methanobrevibacter smithii (strain ATCC 35061 / DSM 861 / OCM 144 / PS).